The following is a 1025-amino-acid chain: Multidrug resistance protein MdtC (1025 aa).

The next 12 helical transmembrane spans lie at 3–23 (FFALFIYRPVATILLSVAITL), 333–353 (EVEQTLIISVALVILVVFLFL), 360–380 (IIPAVAVPVSLIGTFAAMYLC), 387–407 (LSLMALTIATGFVVDDAIVVL), 431–451 (VGFTVLSMSLSLVAVFLPLLL), 463–483 (FAVTLSVAIGISLLVSLTLTP), 528–548 (LVGMVLLGTIALNIWLYISIP), 853–873 (VILIIAAIATVYIVLGILYES), 875–895 (VHPLTILSTLPSAGVGALLAL), 897–917 (LFNAPFSLIALIGIMLLIGIV), 953–973 (PIMMTTLAALFGALPLVLSGG), and 984–1004 (ITIVGGLVMSQLLTLYTTPVV).

Belongs to the resistance-nodulation-cell division (RND) (TC 2.A.6) family. MdtC subfamily. In terms of assembly, part of a tripartite efflux system composed of MdtA, MdtB and MdtC. MdtC forms a heteromultimer with MdtB.

It is found in the cell inner membrane. The MdtABC tripartite complex confers resistance against novobiocin and deoxycholate. This chain is Multidrug resistance protein MdtC, found in Escherichia coli O157:H7 (strain EC4115 / EHEC).